A 396-amino-acid polypeptide reads, in one-letter code: Putative transposase y4rJ (396 aa).

The protein belongs to the transposase 20 family.

This is Putative transposase y4rJ from Sinorhizobium fredii (strain NBRC 101917 / NGR234).